The primary structure comprises 33 residues: Photosystem II reaction center protein Psb30 (33 aa).

Residues 5 to 25 (LIVQLGSLALITVAGPAIIVL) traverse the membrane as a helical segment.

This sequence belongs to the Psb30/Ycf12 family. As to quaternary structure, PSII is composed of 1 copy each of membrane proteins PsbA, PsbB, PsbC, PsbD, PsbE, PsbF, PsbH, PsbI, PsbJ, PsbK, PsbL, PsbM, PsbT, PsbY, PsbZ, Psb30/Ycf12, peripheral proteins of the oxygen-evolving complex and a large number of cofactors. It forms dimeric complexes.

It is found in the plastid. The protein resides in the chloroplast thylakoid membrane. A core subunit of photosystem II (PSII), probably helps stabilize the reaction center. In Euglena stellata, this protein is Photosystem II reaction center protein Psb30.